A 136-amino-acid chain; its full sequence is Small integral membrane protein 23 (136 aa).

Residues 1–31 (MTIQKTGCRGREAAEVVEQRRRSHHCDDRKQ) lie on the Cytoplasmic side of the membrane. The chain crosses the membrane as a helical; Signal-anchor for type II membrane protein span at residues 32-52 (TLLALLILVLYLGMGISGSSW). At 53–136 (EVSGQTKDCN…DLRPEDPCFT (84 aa)) the chain is on the extracellular side. Residues 92 to 124 (LKINLHGFLEKLEKEVRELEQLVRDLEFWLDAL) are a coiled coil.

It is found in the membrane. The sequence is that of Small integral membrane protein 23 (Smim23) from Mus musculus (Mouse).